The primary structure comprises 113 residues: MNTVRVTFLLVFVLAVSLGQADKDENRMEMQEKTEQGKSYLDFAENLLLQKLEELEAKLLEEDSEESRNSRQRRCIGEGVPCDENDPRCCSGLVCLKPTLHGIWYKSYYCYKK.

The N-terminal stretch at 1–21 (MNTVRVTFLLVFVLAVSLGQA) is a signal peptide. Residues 22 to 74 (DKDENRMEMQEKTEQGKSYLDFAENLLLQKLEELEAKLLEEDSEESRNSRQRR) constitute a propeptide that is removed on maturation. A disordered region spans residues 61-83 (EEDSEESRNSRQRRCIGEGVPCD). 3 disulfide bridges follow: Cys75–Cys90, Cys82–Cys95, and Cys89–Cys110.

Belongs to the neurotoxin 14 (magi-1) family. 01 (HNTX-16) subfamily. As to expression, expressed by the venom gland.

The protein localises to the secreted. Probable ion channel inhibitor. The sequence is that of U11-theraphotoxin-Hhn1a from Cyriopagopus hainanus (Chinese bird spider).